We begin with the raw amino-acid sequence, 257 residues long: Putative hydro-lyase Bcen2424_3550 (257 aa).

It belongs to the D-glutamate cyclase family.

In Burkholderia cenocepacia (strain HI2424), this protein is Putative hydro-lyase Bcen2424_3550.